Here is a 500-residue protein sequence, read N- to C-terminus: L-arabinose isomerase (500 aa).

Mn(2+) contacts are provided by Glu-306, Glu-333, His-350, and His-450.

It belongs to the arabinose isomerase family. In terms of assembly, homohexamer. Requires Mn(2+) as cofactor.

It catalyses the reaction beta-L-arabinopyranose = L-ribulose. Its pathway is carbohydrate degradation; L-arabinose degradation via L-ribulose; D-xylulose 5-phosphate from L-arabinose (bacterial route): step 1/3. Its function is as follows. Catalyzes the conversion of L-arabinose to L-ribulose. This Escherichia coli O6:H1 (strain CFT073 / ATCC 700928 / UPEC) protein is L-arabinose isomerase.